A 426-amino-acid chain; its full sequence is Enolase (426 aa).

Position 163 (Gln-163) interacts with (2R)-2-phosphoglycerate. Glu-205 (proton donor) is an active-site residue. Mg(2+) contacts are provided by Asp-242, Glu-283, and Asp-310. 4 residues coordinate (2R)-2-phosphoglycerate: Lys-335, Arg-364, Ser-365, and Lys-386. Lys-335 acts as the Proton acceptor in catalysis.

It belongs to the enolase family. Requires Mg(2+) as cofactor.

The protein resides in the cytoplasm. Its subcellular location is the secreted. It localises to the cell surface. It catalyses the reaction (2R)-2-phosphoglycerate = phosphoenolpyruvate + H2O. It participates in carbohydrate degradation; glycolysis; pyruvate from D-glyceraldehyde 3-phosphate: step 4/5. Functionally, catalyzes the reversible conversion of 2-phosphoglycerate (2-PG) into phosphoenolpyruvate (PEP). It is essential for the degradation of carbohydrates via glycolysis. The protein is Enolase of Aquifex aeolicus (strain VF5).